Here is a 715-residue protein sequence, read N- to C-terminus: MTTELEIQKAGKETGIQIWRIEDFELVPVPKTNHGKFYTGDSYIILKTTALESGRGFEWNLHYWQGKESSQDERGAVAILAVKMDDHLNGGPVEHREVQGNESAAFKGLFPTITYLIGGVASGFTHVEINEVEDRKVLTRVKGKRPVRATQVPIKWTSLTDSDSYVFDIGKEIYVWSGPKASHFEKNKAIQYADGLKNERQGRAELHHIDSLDDKESRTMLKDFFGEAFPGSIPSGESDTVQQVGTTIKLFRISDDSGTLKITLVSENSPFNQGDLSSGDTFVLANARTNHIFVWKGKDSSRTERASAANPDNSFFNKIEMPLTSKLTVLPEGGETANFKSLFTNWKSSRDQRGLGQVHSINKTAKVAKETFDASVLHSNPKKAAESKMIDDGSGKTQIWRVASLRKEPVPKELYGQFYGGDCYIIMYTPQRGANVLYYWQGNKASINERTALPIQTKNTHETECDGNASQIRVVQGTEPPHMMMLFGGKPLIVHLGDTISPTGKSKAASTRLYQVQSFFAGRCRAVEVPAKSSHLNSNDAFLLITPSGSYIWVGKGAVESEIQGAKDTAGILKISKYEIINENQEPNEFWTALGGQSDYWRDEREEGVPVEPRLFEMSNATGNFIAEEINSNYVQSDLNPDSIMMLDAWNYIYVWIGKEANQEEKMSFKSLVDNYVKTDGSGRSKDIPREVFDQGKEPLSFTGHFLGWDKTLWD.

The segment at 1-124 (MTTELEIQKA…YLIGGVASGF (124 aa)) is actin-severing. The stretch at 24–75 (FELVPVPKTNHGKFYTGDSYIILKTTALESGRGFEWNLHYWQGKESSQDERG) is one Gelsolin-like 1 repeat. The segment at 72–75 (DERG) is actin-actin interfilament contact point. 136-145 (KVLTRVKGKR) is an a 1,2-diacyl-sn-glycero-3-phospho-(1D-myo-inositol-4,5-bisphosphate) binding site. Gelsolin-like repeat units follow at residues 147 to 187 (VRAT…FEKN), 260 to 306 (LKIT…TERA), and 405 to 451 (LRKE…NERT). Positions 384–715 (AAESKMIDDG…FLGWDKTLWD (332 aa)) are actin-binding, Ca-sensitive. 9 residues coordinate Ca(2+): glycine 421, aspartate 422, glutamate 449, threonine 499, asparagine 539, aspartate 540, glutamate 562, aspartate 642, and glutamate 665. Gelsolin-like repeat units follow at residues 524–564 (CRAV…SEIQ) and 625–667 (FIAE…EEKM).

Belongs to the villin/gelsolin family. As to expression, predominantly in the body wall muscle, but expression is not restricted to muscle cells.

It is found in the cytoplasm. The protein localises to the cytoskeleton. Calcium-regulated, actin-modulating protein that binds to the plus (or barbed) ends of actin monomers or filaments, preventing monomer exchange (end-blocking or capping). It can promote the assembly of monomers into filaments (nucleation) as well as sever filaments already formed. The protein is Gelsolin, cytoplasmic of Halocynthia roretzi (Sea squirt).